The sequence spans 247 residues: Pulmonary surfactant-associated protein A (247 aa).

An N-terminal signal peptide occupies residues 1–19 (MWCSLALILILVTVSGIMC). A glycan (N-linked (GlcNAc...) asparagine) is linked at Asn20. A Collagen-like domain is found at 27–99 (GSPGIPGTPG…PGERGPPGLP (73 aa)). Pro29, Pro32, Pro35, Pro41, Pro53, Pro56, Pro62, Pro66, and Pro69 each carry 4-hydroxyproline. The interval 32-101 (PGTPGSHGLP…ERGPPGLPAS (70 aa)) is disordered. Over residues 41 to 50 (PGRDGRDGVK) the composition is skewed to basic and acidic residues. The segment covering 53 to 64 (PGPPGPMGPPGV) has biased composition (pro residues). The segment covering 83 to 92 (ERGDKGDPGE) has biased composition (basic and acidic residues). The C-type lectin domain occupies 131-247 (LAVGDKVFAT…LQSRLTICEF (117 aa)). Disulfide bonds link Cys154/Cys245 and Cys223/Cys237. Residue Asn206 is glycosylated (N-linked (GlcNAc...) asparagine). Glu214, Arg216, Asn233, and Asp234 together coordinate Ca(2+).

This sequence belongs to the SFTPA family. In terms of assembly, oligomeric complex of 6 set of homotrimers.

Its subcellular location is the secreted. The protein resides in the extracellular space. The protein localises to the extracellular matrix. It is found in the surface film. Functionally, in presence of calcium ions, it binds to surfactant phospholipids and contributes to lower the surface tension at the air-liquid interface in the alveoli of the mammalian lung and is essential for normal respiration. Enhances the expression of MYO18A/SP-R210 on alveolar macrophages. This is Pulmonary surfactant-associated protein A (SFTPA1) from Cavia porcellus (Guinea pig).